The sequence spans 167 residues: Thioredoxin-like protein HI_1115 (167 aa).

Residues 10–27 traverse the membrane as a helical segment; that stretch reads GLSLFLTFIVITSILDFV. In terms of domain architecture, Thioredoxin spans 30-167; that stretch reads PVVPEEINKI…VRLFFAEFFG (138 aa). A disulfide bridge links cysteine 69 with cysteine 72.

It belongs to the thioredoxin family.

The protein resides in the cell membrane. The protein is Thioredoxin-like protein HI_1115 of Haemophilus influenzae (strain ATCC 51907 / DSM 11121 / KW20 / Rd).